The following is a 176-amino-acid chain: RNA polymerase sigma factor SigZ (176 aa).

A Polymerase core binding motif is present at residues 30–43; the sequence is DLLQIVFMKIQVHL. A DNA-binding region (H-T-H motif) is located at residues 125-144; the sequence is QKELSEKLGISYSGAKSRVQ.

The protein belongs to the sigma-70 factor family. ECF subfamily.

Its function is as follows. Sigma factors are initiation factors that promote the attachment of RNA polymerase to specific initiation sites and are then released. The protein is RNA polymerase sigma factor SigZ (sigZ) of Bacillus subtilis (strain 168).